The following is a 236-amino-acid chain: 1-(5-phosphoribosyl)-5-[(5-phosphoribosylamino)methylideneamino] imidazole-4-carboxamide isomerase (236 aa).

Catalysis depends on Asp8, which acts as the Proton acceptor. The Proton donor role is filled by Asp127.

This sequence belongs to the HisA/HisF family.

It localises to the cytoplasm. The enzyme catalyses 1-(5-phospho-beta-D-ribosyl)-5-[(5-phospho-beta-D-ribosylamino)methylideneamino]imidazole-4-carboxamide = 5-[(5-phospho-1-deoxy-D-ribulos-1-ylimino)methylamino]-1-(5-phospho-beta-D-ribosyl)imidazole-4-carboxamide. Its pathway is amino-acid biosynthesis; L-histidine biosynthesis; L-histidine from 5-phospho-alpha-D-ribose 1-diphosphate: step 4/9. This Campylobacter concisus (strain 13826) protein is 1-(5-phosphoribosyl)-5-[(5-phosphoribosylamino)methylideneamino] imidazole-4-carboxamide isomerase.